A 44-amino-acid chain; its full sequence is Photosystem II reaction center protein K (44 aa).

Positions 1 to 7 (MESLLLA) are excised as a propeptide. Residues 23 to 43 (LPIIPVFFLLLAFVWQAAIGF) traverse the membrane as a helical segment.

The protein belongs to the PsbK family. In terms of assembly, PSII is composed of 1 copy each of membrane proteins PsbA, PsbB, PsbC, PsbD, PsbE, PsbF, PsbH, PsbI, PsbJ, PsbK, PsbL, PsbM, PsbT, PsbX, PsbY, PsbZ, Psb30/Ycf12, at least 3 peripheral proteins of the oxygen-evolving complex and a large number of cofactors. It forms dimeric complexes.

The protein resides in the plastid. The protein localises to the chloroplast thylakoid membrane. Its function is as follows. One of the components of the core complex of photosystem II (PSII). PSII is a light-driven water:plastoquinone oxidoreductase that uses light energy to abstract electrons from H(2)O, generating O(2) and a proton gradient subsequently used for ATP formation. It consists of a core antenna complex that captures photons, and an electron transfer chain that converts photonic excitation into a charge separation. This Trieres chinensis (Marine centric diatom) protein is Photosystem II reaction center protein K.